Here is a 461-residue protein sequence, read N- to C-terminus: Putative aldehyde dehydrogenase FUS7 (461 aa).

NAD(+) is bound at residue 220-225 (GSTTTG). Active-site residues include Glu-242 and Cys-276.

This sequence belongs to the aldehyde dehydrogenase family.

The enzyme catalyses an aldehyde + NAD(+) + H2O = a carboxylate + NADH + 2 H(+). In terms of biological role, putative aldehyde dehydrogenase; part of the gene cluster that mediates the biosynthesis of the mycotoxin fusarin C. Within the cluster, FUS1, FUS2, FUS8 and FUS9 are sufficient for fusarin production. The other FUS cluster members are not essential for fusarin C biosynthesis. In Gibberella fujikuroi (strain CBS 195.34 / IMI 58289 / NRRL A-6831) (Bakanae and foot rot disease fungus), this protein is Putative aldehyde dehydrogenase FUS7.